We begin with the raw amino-acid sequence, 643 residues long: Threonine--tRNA ligase (643 aa).

The 61-residue stretch at 1–61 (MPIITLPDGS…TEDSTLEIIT (61 aa)) folds into the TGS domain. A catalytic region spans residues 243–534 (DHRKIGKALD…ITEEYAGFFP (292 aa)). Positions 334, 385, and 511 each coordinate Zn(2+).

It belongs to the class-II aminoacyl-tRNA synthetase family. Homodimer. The cofactor is Zn(2+).

It is found in the cytoplasm. The enzyme catalyses tRNA(Thr) + L-threonine + ATP = L-threonyl-tRNA(Thr) + AMP + diphosphate + H(+). Functionally, catalyzes the attachment of threonine to tRNA(Thr) in a two-step reaction: L-threonine is first activated by ATP to form Thr-AMP and then transferred to the acceptor end of tRNA(Thr). Also edits incorrectly charged L-seryl-tRNA(Thr). This is Threonine--tRNA ligase from Mannheimia succiniciproducens (strain KCTC 0769BP / MBEL55E).